An 83-amino-acid chain; its full sequence is Exodeoxyribonuclease 7 small subunit (83 aa).

Residues 1–25 (MQDELFETEKAPPKNAKNAPKKSFE) form a disordered region.

Belongs to the XseB family. Heterooligomer composed of large and small subunits.

The protein localises to the cytoplasm. It carries out the reaction Exonucleolytic cleavage in either 5'- to 3'- or 3'- to 5'-direction to yield nucleoside 5'-phosphates.. Bidirectionally degrades single-stranded DNA into large acid-insoluble oligonucleotides, which are then degraded further into small acid-soluble oligonucleotides. This is Exodeoxyribonuclease 7 small subunit from Helicobacter pylori (strain P12).